Consider the following 698-residue polypeptide: Protein artemis (698 aa).

The residue at position 380 (Thr-380) is a Phosphothreonine. Ser-385 carries the phosphoserine modification. 3 disordered regions span residues 445 to 485, 505 to 595, and 620 to 669; these read ANFV…DPDV, LENL…DSIS, and NGVP…LPKP. Over residues 449–461 the composition is skewed to acidic residues; the sequence is DCDESNSDSEGEL. Residues 508–521 are compositionally biased toward polar residues; that stretch reads LPSSIETGGSQSPK. A compositionally biased stretch (low complexity) spans 538 to 551; that stretch reads THISSQNSSQSTHI. A compositionally biased stretch (polar residues) spans 552-583; the sequence is TDQGSQGWDSQCDTVLLSSQEKSGGDSTSLNK. The span at 641–655 shows a compositional bias: low complexity; the sequence is TSLTSTQADSQSSSD. Ser-650 is subject to Phosphoserine; by ATM.

It belongs to the DNA repair metallo-beta-lactamase (DRMBL) family. As to quaternary structure, interacts with LIG4; the interaction is direct. Interacts with ATM. Interacts with BRCA1. Interacts with PRKDC. Interacts with TP53BP1. Also exhibits ATM- and phosphorylation-dependent interaction with the MRN complex, composed of MRE11, RAD50, and NBN. In terms of processing, phosphorylation on undefined residues by PRKDC may stimulate endonucleolytic activity on 5' and 3' hairpins and overhangs. PRKDC must remain present, even after phosphorylation, for efficient hairpin opening. Also phosphorylated by ATM in response to ionizing radiation (IR) and by ATR in response to ultraviolet (UV) radiation.

It localises to the nucleus. Required for V(D)J recombination, the process by which exons encoding the antigen-binding domains of immunoglobulins and T-cell receptor proteins are assembled from individual V, (D), and J gene segments. V(D)J recombination is initiated by the lymphoid specific RAG endonuclease complex, which generates site specific DNA double strand breaks (DSBs). These DSBs present two types of DNA end structures: hairpin sealed coding ends and phosphorylated blunt signal ends. These ends are independently repaired by the non homologous end joining (NHEJ) pathway to form coding and signal joints respectively. This protein exhibits single-strand specific 5'-3' exonuclease activity in isolation, and acquires endonucleolytic activity on 5' and 3' hairpins and overhangs when in a complex with PRKDC. The latter activity is required specifically for the resolution of closed hairpins prior to the formation of the coding joint. May also be required for the repair of complex DSBs induced by ionizing radiation, which require substantial end-processing prior to religation by NHEJ. In Rattus norvegicus (Rat), this protein is Protein artemis (Dclre1c).